The chain runs to 253 residues: Molybdate import ATP-binding protein MolC (253 aa).

The 225-residue stretch at 5 to 229 folds into the ABC transporter domain; sequence LSVENLGFYY…NLTALFHLPM (225 aa). Position 38-45 (38-45) interacts with ATP; it reads GQNGCGKS.

This sequence belongs to the ABC transporter superfamily. As to quaternary structure, the complex is composed of two ATP-binding proteins (MolC), two transmembrane proteins (MolB) and a solute-binding protein (MolA).

The protein resides in the cell inner membrane. It catalyses the reaction molybdate(out) + ATP + H2O = molybdate(in) + ADP + phosphate + H(+). Its activity is regulated as follows. The MolBCA complex shows a decrease in affinity in the presence of increasing concentrations of substrate and nucleotide. Part of the ABC transporter complex MolBCA involved in molybdate import. Responsible for energy coupling to the transport system. Functions as a low-affinity molybdate transporter. In Haemophilus influenzae (strain ATCC 51907 / DSM 11121 / KW20 / Rd), this protein is Molybdate import ATP-binding protein MolC.